We begin with the raw amino-acid sequence, 313 residues long: MLEKQSVNQKEQYNFNKLQKRLRRNVGQAIADFNMIEEGDRVMVCLSGGKDSYTMLDILQSLQKSAPINFSLIAVNLDQKQPGFPEDILPAYLDKQGVEYKIVEENTYGIVKEIIPDGKTTCSLCSRLRRGILYRTATELGATKIALGHHRDDILQTLFLNMFYGGKLKGMPPKLMSDDGKHIVIRPLAYCREKDIERFAVAREYPIIPCNLCGSQPNLQRQVIKDMLRDWDKQYPGRIETMFSAMQNVVPSHLNDHKLFDFKSITHDSDIIDGGDLAFDREALPLNPVGWQPEDDEDTEKRPSVRLDVLEIK.

The PP-loop motif motif lies at Ser-47–Ser-52. [4Fe-4S] cluster is bound by residues Cys-122, Cys-125, and Cys-213.

This sequence belongs to the TtcA family. In terms of assembly, homodimer. Requires Mg(2+) as cofactor. It depends on [4Fe-4S] cluster as a cofactor.

It localises to the cytoplasm. The catalysed reaction is cytidine(32) in tRNA + S-sulfanyl-L-cysteinyl-[cysteine desulfurase] + AH2 + ATP = 2-thiocytidine(32) in tRNA + L-cysteinyl-[cysteine desulfurase] + A + AMP + diphosphate + H(+). It participates in tRNA modification. In terms of biological role, catalyzes the ATP-dependent 2-thiolation of cytidine in position 32 of tRNA, to form 2-thiocytidine (s(2)C32). The sulfur atoms are provided by the cysteine/cysteine desulfurase (IscS) system. The chain is tRNA-cytidine(32) 2-sulfurtransferase from Yersinia pseudotuberculosis serotype IB (strain PB1/+).